A 554-amino-acid polypeptide reads, in one-letter code: Glucose-6-phosphate isomerase (554 aa).

Glu-358 (proton donor) is an active-site residue. Catalysis depends on residues His-389 and Lys-515.

The protein belongs to the GPI family.

It localises to the cytoplasm. The catalysed reaction is alpha-D-glucose 6-phosphate = beta-D-fructose 6-phosphate. The protein operates within carbohydrate biosynthesis; gluconeogenesis. It participates in carbohydrate degradation; glycolysis; D-glyceraldehyde 3-phosphate and glycerone phosphate from D-glucose: step 2/4. In terms of biological role, catalyzes the reversible isomerization of glucose-6-phosphate to fructose-6-phosphate. In Mycobacterium leprae (strain Br4923), this protein is Glucose-6-phosphate isomerase.